The primary structure comprises 709 residues: Leucine-rich repeat and calponin homology domain-containing protein 1 (709 aa).

The segment covering Leu-24–His-37 has biased composition (basic residues). A disordered region spans residues Leu-24–Leu-49. LRR repeat units follow at residues Ala-60–Gly-83, Leu-86–Gln-108, Phe-109–Asn-131, Leu-132–Leu-155, Leu-157–Gln-176, Leu-177–Gln-199, Leu-200–Leu-223, Leu-225–Glu-244, and Met-245–Lys-268. Basic and acidic residues-rich tracts occupy residues His-301–Asp-312 and Gln-381–Ala-390. A disordered region spans residues His-301–Ala-390. Phosphoserine occurs at positions 395, 518, and 522. The disordered stretch occupies residues Ser-504–Asn-526. Residue Thr-581 is modified to Phosphothreonine. The Calponin-homology (CH) domain maps to Met-589–Thr-702.

In terms of assembly, interacts (via LRR repeats) with unphosphorylated DOCK8 (via DHR-2 domain); the interaction prevents the association between DOCK8 and CDC42.

Its subcellular location is the cytoplasm. Its function is as follows. Acts as a negative regulator of GTPase CDC42 by sequestering CDC42-guanine exchange factor DOCK8. Probably by preventing CDC42 activation, negatively regulates CD4(+) T-cell migration in response to chemokine stimulation. The sequence is that of Leucine-rich repeat and calponin homology domain-containing protein 1 (Lrch1) from Mus musculus (Mouse).